We begin with the raw amino-acid sequence, 413 residues long: Histidine--tRNA ligase (413 aa).

Belongs to the class-II aminoacyl-tRNA synthetase family. As to quaternary structure, homodimer.

It is found in the cytoplasm. The catalysed reaction is tRNA(His) + L-histidine + ATP = L-histidyl-tRNA(His) + AMP + diphosphate + H(+). In Wolbachia sp. subsp. Brugia malayi (strain TRS), this protein is Histidine--tRNA ligase.